The following is an 86-amino-acid chain: Cerebrin prohormone (86 aa).

Positions 1-27 are cleaved as a signal peptide; that stretch reads MFGYRSLLVLLVTLSLCLLLQSSHCSA. The propeptide occupies 28 to 64; the sequence is VRTYGNDLDARARREIISLAARLIKLSMYGPEDDSFV. Ile-83 carries the isoleucine amide modification.

Expressed only in cerebral ganglion.

It is found in the secreted. May function as a hormone and may play a neuromodulatory role. The protein is Cerebrin prohormone (CBPH) of Aplysia californica (California sea hare).